A 136-amino-acid polypeptide reads, in one-letter code: Small ribosomal subunit protein eS8 (136 aa).

Positions 1–23 are disordered; it reads MGVYHGNDLKKPTGGKKRPHQKV. Over residues 13 to 23 the composition is skewed to basic residues; sequence TGGKKRPHQKV.

It belongs to the eukaryotic ribosomal protein eS8 family. Part of the 30S ribosomal subunit.

The chain is Small ribosomal subunit protein eS8 from Hyperthermus butylicus (strain DSM 5456 / JCM 9403 / PLM1-5).